A 130-amino-acid chain; its full sequence is MLLALLPVLGIHFVLRDAQAQSVTQPDARVTVSEGASLQLRCKYSYSATPYLFWYVQYPRQGLQLLLKYYSGDPVVQGVNGFEAEFSKSNSSFHLRKASVHWSDSAVYFCAVSGFASALTFGSGTKVIVL.

Positions 1–20 (MLLALLPVLGIHFVLRDAQA) are cleaved as a signal peptide. Residues 21-114 (QSVTQPDARV…SAVYFCAVSG (94 aa)) form a v segment region. N90 carries N-linked (GlcNAc...) asparagine glycosylation. The tract at residues 115 to 130 (FASALTFGSGTKVIVL) is j segment.

The sequence is that of T-cell receptor alpha chain V region PHDS58 from Mus musculus (Mouse).